A 485-amino-acid polypeptide reads, in one-letter code: Solute carrier family 35 member F4 (485 aa).

Polar residues-rich tracts occupy residues serine 32 to threonine 42 and cysteine 50 to leucine 64. Disordered stretches follow at residues serine 32–leucine 64 and glutamine 78–glutamate 111. Residues arginine 88–aspartate 98 are compositionally biased toward basic and acidic residues. The span at aspartate 99–glutamate 111 shows a compositional bias: polar residues. 10 helical membrane passes run isoleucine 129–valine 149, phenylalanine 156–valine 176, alanine 217–leucine 234, aspartate 241–leucine 261, phenylalanine 265–tyrosine 285, isoleucine 294–phenylalanine 314, phenylalanine 329–tyrosine 349, phenylalanine 359–valine 381, valine 383–alanine 405, and valine 414–methionine 434. The EamA domain maps to leucine 225–tyrosine 285.

It belongs to the SLC35F solute transporter family.

The protein localises to the membrane. Functionally, putative solute transporter. This chain is Solute carrier family 35 member F4 (Slc35f4), found in Mus musculus (Mouse).